Consider the following 631-residue polypeptide: Phosphomethylpyrimidine synthase (631 aa).

Substrate contacts are provided by residues Asn-239, Met-268, Tyr-297, His-333, 353–355 (SRG), 394–397 (DGLR), and Glu-433. Position 437 (His-437) interacts with Zn(2+). Tyr-460 contacts substrate. Position 501 (His-501) interacts with Zn(2+). [4Fe-4S] cluster-binding residues include Cys-581, Cys-584, and Cys-589.

It belongs to the ThiC family. Homodimer. [4Fe-4S] cluster is required as a cofactor.

The enzyme catalyses 5-amino-1-(5-phospho-beta-D-ribosyl)imidazole + S-adenosyl-L-methionine = 4-amino-2-methyl-5-(phosphooxymethyl)pyrimidine + CO + 5'-deoxyadenosine + formate + L-methionine + 3 H(+). The protein operates within cofactor biosynthesis; thiamine diphosphate biosynthesis. In terms of biological role, catalyzes the synthesis of the hydroxymethylpyrimidine phosphate (HMP-P) moiety of thiamine from aminoimidazole ribotide (AIR) in a radical S-adenosyl-L-methionine (SAM)-dependent reaction. This Shigella dysenteriae serotype 1 (strain Sd197) protein is Phosphomethylpyrimidine synthase.